A 313-amino-acid chain; its full sequence is Formimidoylglutamase (313 aa).

H130, D155, H157, D159, D241, and D243 together coordinate Mn(2+).

The protein belongs to the arginase family. The cofactor is Mn(2+).

It catalyses the reaction N-formimidoyl-L-glutamate + H2O = formamide + L-glutamate. The protein operates within amino-acid degradation; L-histidine degradation into L-glutamate; L-glutamate from N-formimidoyl-L-glutamate (hydrolase route): step 1/1. Catalyzes the conversion of N-formimidoyl-L-glutamate to L-glutamate and formamide. This Salmonella schwarzengrund (strain CVM19633) protein is Formimidoylglutamase.